A 120-amino-acid polypeptide reads, in one-letter code: Glycine cleavage system H protein (120 aa).

Positions 17–99 (VATVGITEHA…QGAAWFFKLK (83 aa)) constitute a Lipoyl-binding domain. Lys58 carries the post-translational modification N6-lipoyllysine.

It belongs to the GcvH family. The glycine cleavage system is composed of four proteins: P, T, L and H. Requires (R)-lipoate as cofactor.

Its function is as follows. The glycine cleavage system catalyzes the degradation of glycine. The H protein shuttles the methylamine group of glycine from the P protein to the T protein. The chain is Glycine cleavage system H protein from Sinorhizobium medicae (strain WSM419) (Ensifer medicae).